We begin with the raw amino-acid sequence, 211 residues long: Protein crossbronx-like (211 aa).

A UBC core domain is found at 17–177 (NQGYQILAEY…VRNSILWSCK (161 aa)).

The protein belongs to the ubiquitin-conjugating enzyme family. FTS subfamily.

In Drosophila grimshawi (Hawaiian fruit fly), this protein is Protein crossbronx-like.